A 795-amino-acid chain; its full sequence is Phenylalanine--tRNA ligase beta subunit (795 aa).

Residues 39–148 (AGTFNGVKVG…IDAPIGMDFR (110 aa)) enclose the tRNA-binding domain. The region spanning 401-476 (PKPNKVALRR…RIYGYDNIPN (76 aa)) is the B5 domain. Mg(2+)-binding residues include Asp-454, Asp-460, Glu-463, and Glu-464. The FDX-ACB domain occupies 701–794 (SKFPANRRDI…VSEKFGASLR (94 aa)).

This sequence belongs to the phenylalanyl-tRNA synthetase beta subunit family. Type 1 subfamily. As to quaternary structure, tetramer of two alpha and two beta subunits. Mg(2+) serves as cofactor.

It is found in the cytoplasm. It catalyses the reaction tRNA(Phe) + L-phenylalanine + ATP = L-phenylalanyl-tRNA(Phe) + AMP + diphosphate + H(+). This Vibrio vulnificus (strain CMCP6) protein is Phenylalanine--tRNA ligase beta subunit.